A 682-amino-acid polypeptide reads, in one-letter code: MFEQNQKTIFVLDHTRYFSIASEDYISMDFLKGKPSVDTGTGAGVGGASGLGTQFSKSLWTCACESSIEYCRVVWDLFPGKKHVRFIVSDTAAHIVNTWSTSTQNMSHVMNAMVMVGVPSRSMPQSSDYSVIHGLRAAIEALAEPTDEQLATIASGEPVHIPNEGRVICITSARDNTSMKSLEDIFNTVLIQQNALAGPPAKKGLAIDHCHLVILNIVPLGVESLVTNRGLLNISPLLDVEIHTVSAPDISHKLTHLILDHYNLASTTVTNIPMKEEQNANSSANYDVEILHSRSAHSIACGPDFSLPTSIKPGATYETVTLKWCTPRGCGSADLQPCLGQFLVTPVDVTSRPSSCLINFLLNGRSVLLEMPRKAGSKATSHMLSARGGEIFIHSLCITRSCMDEAPAIGDGPGGRVTDYRTTELGQLMKMSRMVPLKAKDPTAPGLPRRMPRYFPLTNGSSILFHLQRHISWMPHFLHLLVKEDMDKQEEVRCQQHIHELYKSASRGDMLPFTHTNGARLKLSKAKDQYRLLYRELEQLIHLNATTVHHKNLLESLQSLRAAYGEAKSEPNSSLLRSYTESPHSPERLEPIPSGGSSGSNSNSLLKASKRRMSSCGQRSLLDIISSAERSQANKRLDFSGRLCTPLGQVAKLYPDFGNKEKDSLLAGTTAAPNVKEESIRS.

Residues 517–570 adopt a coiled-coil conformation; the sequence is NGARLKLSKAKDQYRLLYRELEQLIHLNATTVHHKNLLESLQSLRAAYGEAKSE. Positions 571 to 583 are enriched in polar residues; the sequence is PNSSLLRSYTESP. Positions 571-612 are disordered; sequence PNSSLLRSYTESPHSPERLEPIPSGGSSGSNSNSLLKASKRR. The Nuclear localization signal (NLS) motif lies at 606-612; sequence LKASKRR.

This sequence belongs to the Integrator subunit 13 family. As to quaternary structure, belongs to the multiprotein complex Integrator, at least composed of IntS1, IntS2, IntS3, IntS4, omd/IntS5, IntS6, defl/IntS7, IntS8, IntS9, IntS10, IntS11, IntS12, asun/IntS13, IntS14 and IntS15. The core complex associates with protein phosphatase 2A subunits mts/PP2A and Pp2A-29B, to form the Integrator-PP2A (INTAC) complex. Phosphorylated.

The protein resides in the nucleus. It is found in the cytoplasm. The protein localises to the perinuclear region. In terms of biological role, component of the integrator complex, a multiprotein complex that terminates RNA polymerase II (Pol II) transcription in the promoter-proximal region of genes. The integrator complex provides a quality checkpoint during transcription elongation by driving premature transcription termination of transcripts that are unfavorably configured for transcriptional elongation: the complex terminates transcription by (1) catalyzing dephosphorylation of the C-terminal domain (CTD) of Pol II subunit Polr2A/Rbp1 and Spt5, and (2) degrading the exiting nascent RNA transcript via endonuclease activity. The integrator complex is also involved in the 3'-end processing of the U7 snRNA, and also the spliceosomal snRNAs U1, U2, U4 and U5. The protein is Protein asunder (asun) of Drosophila ananassae (Fruit fly).